A 187-amino-acid chain; its full sequence is Pumilio homolog 26 (187 aa).

The stretch at 20 to 42 is one Pumilio 1; degenerate repeat; it reads VATEFLRVSNDVAELHKLSSKLT. The stretch at 43 to 78 is one Pumilio 2; degenerate repeat; that stretch reads SDPYLFVEFVKTIRGFLSVQTALGLSGEIDTVFLQV. One copy of the Pumilio 3; degenerate repeat lies at 79–116; it reads IKGWFPDLITETFSFLIVVRIINLFNKRANSKVYPDIL. One copy of the Pumilio 4; degenerate repeat lies at 117–154; sequence RRIGNNALYLTRNPLRGICLVEKAINVRDPDCTVFIAL. The stretch at 155-187 is one Pumilio 5 repeat; it reads KLHSHYVELSFEELGSNIVEKLLSVGESGICGV.

It localises to the cytoplasm. In terms of biological role, sequence-specific RNA-binding protein that regulates translation and mRNA stability by binding the 3'-UTR of target mRNAs. The sequence is that of Pumilio homolog 26 (APUM26) from Arabidopsis thaliana (Mouse-ear cress).